A 411-amino-acid polypeptide reads, in one-letter code: Adenylosuccinate synthetase (411 aa).

Residues Gly11 to Lys17 and Gly39 to Thr41 contribute to the GTP site. Asp12 (proton acceptor) is an active-site residue. The Mg(2+) site is built by Asp12 and Gly39. Residues Asp12 to Lys15, Asn37 to His40, Thr121, Arg135, Gln215, Thr230, and Arg294 contribute to the IMP site. His40 acts as the Proton donor in catalysis. Thr290–Arg296 serves as a coordination point for substrate. GTP contacts are provided by residues Arg296, Lys322–Asp324, and Ser400–Ser402.

This sequence belongs to the adenylosuccinate synthetase family. Homodimer. Mg(2+) is required as a cofactor.

It localises to the cytoplasm. It carries out the reaction IMP + L-aspartate + GTP = N(6)-(1,2-dicarboxyethyl)-AMP + GDP + phosphate + 2 H(+). Its pathway is purine metabolism; AMP biosynthesis via de novo pathway; AMP from IMP: step 1/2. In terms of biological role, plays an important role in the de novo pathway of purine nucleotide biosynthesis. Catalyzes the first committed step in the biosynthesis of AMP from IMP. In Helicobacter pylori (strain HPAG1), this protein is Adenylosuccinate synthetase.